A 474-amino-acid polypeptide reads, in one-letter code: L-arabinose isomerase (474 aa).

Residues Glu306, Glu331, His348, and His447 each coordinate Mn(2+).

The protein belongs to the arabinose isomerase family. Mn(2+) is required as a cofactor.

It carries out the reaction beta-L-arabinopyranose = L-ribulose. It functions in the pathway carbohydrate degradation; L-arabinose degradation via L-ribulose; D-xylulose 5-phosphate from L-arabinose (bacterial route): step 1/3. Its function is as follows. Catalyzes the conversion of L-arabinose to L-ribulose. This is L-arabinose isomerase from Oceanobacillus iheyensis (strain DSM 14371 / CIP 107618 / JCM 11309 / KCTC 3954 / HTE831).